Here is a 282-residue protein sequence, read N- to C-terminus: Chromatin modification-related protein YNG2 (282 aa).

A coiled-coil region spans residues 35–86 (LIEEKKKYEQKESQIHKFIRQQGSIPKHPQEDGLDKEIKESLLKCQSLQREK). A disordered region spans residues 123–217 (DGDMDSAAEA…KGQNGSPENE (95 aa)). Low complexity predominate over residues 129–143 (AAEASRESSVVSNSS). S183 bears the Phosphoserine mark. T185 is modified (phosphothreonine). A Phosphoserine modification is found at S188. Over residues 191–203 (IEKKIARTKEFKN) the composition is skewed to basic and acidic residues. The span at 204-214 (SRNGKGQNGSP) shows a compositional bias: polar residues. Residues 222-271 (TLYCFCQRVSFGEMVACDGPNCKYEWFHYDCVNLKEPPKGTWYCPECKIE) form a PHD-type zinc finger. Positions 225, 227, 238, 243, 249, 252, 265, and 268 each coordinate Zn(2+).

It belongs to the ING family. As to quaternary structure, interacts with H3K4me3 and to a lesser extent with H3K4me2. Component of the NuA4 histone acetyltransferase complex composed of at least ACT1, ARP4, YAF9, VID21, SWC4, EAF3, EAF5, EAF6, EAF7, EPL1, ESA1, TRA1 and YNG2.

The protein resides in the nucleus. Its function is as follows. Component of the NuA4 histone acetyltransferase complex which is involved in transcriptional activation of selected genes principally by acetylation of nucleosomal histone H4 and H2A. The NuA4 complex is also involved in DNA repair. Involved in cell cycle progression and meiosis. The polypeptide is Chromatin modification-related protein YNG2 (YNG2) (Saccharomyces cerevisiae (strain ATCC 204508 / S288c) (Baker's yeast)).